The primary structure comprises 426 residues: Enolase (426 aa).

Glutamine 165 contributes to the (2R)-2-phosphoglycerate binding site. The Proton donor role is filled by glutamate 209. Residues aspartate 244, glutamate 287, and aspartate 313 each coordinate Mg(2+). (2R)-2-phosphoglycerate contacts are provided by lysine 338, arginine 367, serine 368, and lysine 389. Lysine 338 acts as the Proton acceptor in catalysis.

This sequence belongs to the enolase family. Requires Mg(2+) as cofactor.

Its subcellular location is the cytoplasm. It is found in the secreted. The protein resides in the cell surface. The catalysed reaction is (2R)-2-phosphoglycerate = phosphoenolpyruvate + H2O. It functions in the pathway carbohydrate degradation; glycolysis; pyruvate from D-glyceraldehyde 3-phosphate: step 4/5. Functionally, catalyzes the reversible conversion of 2-phosphoglycerate (2-PG) into phosphoenolpyruvate (PEP). It is essential for the degradation of carbohydrates via glycolysis. This Methanococcus vannielii (strain ATCC 35089 / DSM 1224 / JCM 13029 / OCM 148 / SB) protein is Enolase.